A 67-amino-acid chain; its full sequence is Large ribosomal subunit protein bL32 (67 aa).

A compositionally biased stretch (basic residues) spans Met1–Gln19. The interval Met1 to Lys21 is disordered.

The protein belongs to the bacterial ribosomal protein bL32 family.

The protein is Large ribosomal subunit protein bL32 of Micrococcus luteus (strain ATCC 4698 / DSM 20030 / JCM 1464 / CCM 169 / CCUG 5858 / IAM 1056 / NBRC 3333 / NCIMB 9278 / NCTC 2665 / VKM Ac-2230) (Micrococcus lysodeikticus).